The sequence spans 667 residues: MSNAHHDAFDKATKAGFIIALGIVYGDIGTSPLYTMQSLVDNQGGLSQVSEAFILGSVSLIIWTLTLITTIKYVLIALKADNHHEGGIFSLFTLVRRMSRWLIIPAMLGGATLLSDGALTPAVTVTSAIEGLKAVPELSSIYQNQTNVILTTLLILMVLFGLQRFGTGVIGKLFGPVMLVWFSVLGISGLLNSLQHLEILKAINPYYALHLLVSPENHRGIFILGSIFLATTGAEALYSDLGHVGRGNIYASWPFVKVCIILSYCGQAAWILAHKDSGIALNPFFASVPEGLRVYLVILATLAAIIASQALISGSFTLVSEAMRLKIFPLFKITYPGANLGQLYIPVINWSLFAVTSCTVLYFRTSAHMEAAYGLAITITMLMTTILLAYYLIKEGVKPLLASLLMAFFAFIEFIFFLASAVKFMHGGYVVVVLALAIVFVMVIWHAGTVIVAKYVKSLSLNDYKHQIKLLRDDLRFDLYQTNVVYLTNRMKKDLIDRSILYSILDKRPKRAQVYWFVNVRVTDEPYTATYKVDMLGTDYIVCVELYLGFRMPQTVPRYLRTIVQDLMESGRLPKQVQDYTITPGREVGDFRFVIIEERVSHARQLSTLERFVMQTKASIKHVTASPMRWFGLQYSEATVEVVPLLLSDVLKLPIKEIKACTKDEKA.

The next 12 membrane-spanning stretches (helical) occupy residues 16-36 (GFII…LYTM), 58-78 (VSLI…LIAL), 101-121 (WLII…ALTP), 146-166 (TNVI…QRFG), 167-187 (TGVI…VLGI), 221-241 (IFIL…YSDL), 253-273 (WPFV…WILA), 294-314 (VYLV…LISG), 343-363 (LYIP…VLYF), 373-393 (YGLA…YYLI), 399-419 (PLLA…FFLA), and 431-451 (VVVL…GTVI).

It belongs to the HAK/KUP transporter (TC 2.A.72) family.

The protein resides in the cell membrane. It carries out the reaction K(+)(in) + H(+)(in) = K(+)(out) + H(+)(out). In terms of biological role, transport of potassium into the cell. Likely operates as a K(+):H(+) symporter. The polypeptide is Probable potassium transport system protein Kup (Streptococcus equi subsp. zooepidemicus (strain MGCS10565)).